The following is a 376-amino-acid chain: Lipoyl synthase, mitochondrial (376 aa).

Residues C102, C107, C113, C133, C137, C140, and S348 each contribute to the [4Fe-4S] cluster site. The region spanning 116-337 (GGEDKTATAT…EEVGGEMGFA (222 aa)) is the Radical SAM core domain.

The protein belongs to the radical SAM superfamily. Lipoyl synthase family. [4Fe-4S] cluster serves as cofactor.

It localises to the mitochondrion. It carries out the reaction [[Fe-S] cluster scaffold protein carrying a second [4Fe-4S](2+) cluster] + N(6)-octanoyl-L-lysyl-[protein] + 2 oxidized [2Fe-2S]-[ferredoxin] + 2 S-adenosyl-L-methionine + 4 H(+) = [[Fe-S] cluster scaffold protein] + N(6)-[(R)-dihydrolipoyl]-L-lysyl-[protein] + 4 Fe(3+) + 2 hydrogen sulfide + 2 5'-deoxyadenosine + 2 L-methionine + 2 reduced [2Fe-2S]-[ferredoxin]. Its pathway is protein modification; protein lipoylation via endogenous pathway; protein N(6)-(lipoyl)lysine from octanoyl-[acyl-carrier-protein]: step 2/2. In terms of biological role, catalyzes the radical-mediated insertion of two sulfur atoms into the C-6 and C-8 positions of the octanoyl moiety bound to the lipoyl domains of lipoate-dependent enzymes, thereby converting the octanoylated domains into lipoylated derivatives. The protein is Lipoyl synthase, mitochondrial of Branchiostoma floridae (Florida lancelet).